Consider the following 342-residue polypeptide: uncharacterized protein (342 aa).

The protein belongs to the cycloisomerase 2 family.

This is an uncharacterized protein from Staphylococcus aureus (strain NCTC 8325 / PS 47).